The chain runs to 256 residues: Phosphonates import ATP-binding protein PhnC (256 aa).

Residues 5 to 253 form the ABC transporter domain; it reads LRITGLVKEY…MLKTIYGGES (249 aa). 38 to 45 serves as a coordination point for ATP; it reads GPSGTGKS.

This sequence belongs to the ABC transporter superfamily. Phosphonates importer (TC 3.A.1.9.1) family. In terms of assembly, the complex is composed of two ATP-binding proteins (PhnC), two transmembrane proteins (PhnE) and a solute-binding protein (PhnD).

The protein resides in the cell inner membrane. The catalysed reaction is phosphonate(out) + ATP + H2O = phosphonate(in) + ADP + phosphate + H(+). In terms of biological role, part of the ABC transporter complex PhnCDE involved in phosphonates import. Responsible for energy coupling to the transport system. The chain is Phosphonates import ATP-binding protein PhnC from Bordetella parapertussis (strain 12822 / ATCC BAA-587 / NCTC 13253).